The following is a 268-amino-acid chain: Large ribosomal subunit protein bL9m (268 aa).

The transit peptide at 1–52 directs the protein to the mitochondrion; the sequence is MAAAAFAVPRGVQLRVLTERLLRGGVRELLRPRLSGSTPGSERDFSLSHSRG.

The protein belongs to the bacterial ribosomal protein bL9 family. As to quaternary structure, component of the mitochondrial ribosome large subunit (39S) which comprises a 16S rRNA and about 50 distinct proteins.

It is found in the mitochondrion. The polypeptide is Large ribosomal subunit protein bL9m (MRPL9) (Bos taurus (Bovine)).